Reading from the N-terminus, the 297-residue chain is Urease accessory protein UreD (297 aa).

It belongs to the UreD family. As to quaternary structure, ureD, UreF and UreG form a complex that acts as a GTP-hydrolysis-dependent molecular chaperone, activating the urease apoprotein by helping to assemble the nickel containing metallocenter of UreC. The UreE protein probably delivers the nickel.

It localises to the cytoplasm. In terms of biological role, required for maturation of urease via the functional incorporation of the urease nickel metallocenter. In Anaeromyxobacter sp. (strain Fw109-5), this protein is Urease accessory protein UreD.